We begin with the raw amino-acid sequence, 154 residues long: General odorant-binding protein 83a (154 aa).

An N-terminal signal peptide occupies residues 1 to 33 (MALNGFGRRVSASVLLIALSLLSGALILPPAAA). 3 cysteine pairs are disulfide-bonded: Cys55–Cys86, Cys82–Cys133, and Cys124–Cys142.

This sequence belongs to the PBP/GOBP family. In terms of tissue distribution, in the ventrolateral region of the antenna, expressed in two distinct types of olfactory hairs: in most sensilla trichodea and in a subset of the small sensilla basiconica (at protein level).

It is found in the secreted. The polypeptide is General odorant-binding protein 83a (Obp83a) (Drosophila melanogaster (Fruit fly)).